We begin with the raw amino-acid sequence, 1215 residues long: Homeodomain-interacting protein kinase 3 (1215 aa).

A Glycyl lysine isopeptide (Lys-Gly) (interchain with G-Cter in SUMO2) cross-link involves residue K27. The region spanning 197-525 is the Protein kinase domain; that stretch reads YEVLDFLGRG…PAETLNHPFV (329 aa). Residues 203-211 and K226 each bind ATP; that span reads LGRGTFGQV. D322 serves as the catalytic Proton acceptor. Y359 is modified (phosphotyrosine). The interaction with AR stretch occupies residues 767–944; that stretch reads QNRGILVKLM…NSMSDEEQES (178 aa). Positions 796 to 891 are interaction with FAS; that stretch reads NTNIPHSAFI…SQRHSLRECK (96 aa). The required for localization to nuclear speckles stretch occupies residues 855–1011; sequence QTIIIADSPS…ENGLNADEHM (157 aa). Residues 866–918 form an SUMO interaction motifs (SIM); required for nuclear localization and kinase activity region; it reads AVSVITISSDTDEEETSQRHSLRECKGSLDCEACQSTLNIDRMCSLSSPDSTL. Positions 870-880 are interaction with UBL1; that stretch reads ITISSDTDEEE. The segment covering 912-929 has biased composition (low complexity); sequence SSPDSTLSTSSSGQSSPS. Positions 912 to 987 are disordered; that stretch reads SSPDSTLSTS…ELVSSADTET (76 aa). Positions 945-957 are enriched in polar residues; sequence SCDTVDGSPTSDS. K1208 participates in a covalent cross-link: Glycyl lysine isopeptide (Lys-Gly) (interchain with G-Cter in SUMO).

Belongs to the protein kinase superfamily. CMGC Ser/Thr protein kinase family. HIPK subfamily. As to quaternary structure, interacts with Nkx1-2. Interacts with FAS and DAXX. Probably part of a complex consisting of HIPK3, FAS and FADD. Interacts with and stabilizes ligand-bound androgen receptor (AR). Interacts with UBL1/SUMO-1. Binds to NR5A1/SF1, SPEN/MINT and RUNX2. Post-translationally, autophosphorylated, but autophosphorylation is not required for catalytic activity. In terms of processing, may be sumoylated. Overexpressed in multidrug resistant cells. Highly expressed in heart and skeletal muscle, and at lower levels in placenta, pancreas, brain, spleen, prostate, thymus, testis, small intestine, colon and leukocytes. Not found in liver and lung.

It localises to the cytoplasm. Its subcellular location is the nucleus. The catalysed reaction is L-seryl-[protein] + ATP = O-phospho-L-seryl-[protein] + ADP + H(+). The enzyme catalyses L-threonyl-[protein] + ATP = O-phospho-L-threonyl-[protein] + ADP + H(+). Serine/threonine-protein kinase involved in transcription regulation, apoptosis and steroidogenic gene expression. Phosphorylates JUN and RUNX2. Seems to negatively regulate apoptosis by promoting FADD phosphorylation. Enhances androgen receptor-mediated transcription. May act as a transcriptional corepressor for NK homeodomain transcription factors. The phosphorylation of NR5A1 activates SF1 leading to increased steroidogenic gene expression upon cAMP signaling pathway stimulation. In osteoblasts, supports transcription activation: phosphorylates RUNX2 that synergizes with SPEN/MINT to enhance FGFR2-mediated activation of the osteocalcin FGF-responsive element (OCFRE). This chain is Homeodomain-interacting protein kinase 3 (HIPK3), found in Homo sapiens (Human).